We begin with the raw amino-acid sequence, 777 residues long: Elongation factor G, mitochondrial (777 aa).

The 305-residue stretch at 34–338 folds into the tr-type G domain; sequence LRQRNVGISA…GMCAYLPNPM (305 aa). GTP is bound by residues 43 to 50, 136 to 140, and 190 to 193; these read AHIDSGKT, DTPGH, and NKMD.

The protein belongs to the TRAFAC class translation factor GTPase superfamily. Classic translation factor GTPase family. EF-G/EF-2 subfamily.

It is found in the mitochondrion. It participates in protein biosynthesis; polypeptide chain elongation. Mitochondrial GTPase that catalyzes the GTP-dependent ribosomal translocation step during translation elongation. During this step, the ribosome changes from the pre-translocational (PRE) to the post-translocational (POST) state as the newly formed A-site-bound peptidyl-tRNA and P-site-bound deacylated tRNA move to the P and E sites, respectively. Catalyzes the coordinated movement of the two tRNA molecules, the mRNA and conformational changes in the ribosome. This is Elongation factor G, mitochondrial from Malassezia globosa (strain ATCC MYA-4612 / CBS 7966) (Dandruff-associated fungus).